Consider the following 291-residue polypeptide: Homoserine kinase (291 aa).

Arg-80–Ala-90 lines the ATP pocket.

Belongs to the GHMP kinase family. Homoserine kinase subfamily.

It is found in the cytoplasm. It carries out the reaction L-homoserine + ATP = O-phospho-L-homoserine + ADP + H(+). It participates in amino-acid biosynthesis; L-threonine biosynthesis; L-threonine from L-aspartate: step 4/5. Catalyzes the ATP-dependent phosphorylation of L-homoserine to L-homoserine phosphate. The polypeptide is Homoserine kinase (Natronomonas pharaonis (strain ATCC 35678 / DSM 2160 / CIP 103997 / JCM 8858 / NBRC 14720 / NCIMB 2260 / Gabara) (Halobacterium pharaonis)).